The sequence spans 512 residues: MADKLIIFDTTLRDGEQSPGASMTKDEKLRIARQLERLKVDVIEAGFAASSNGDFDAVRAIASTIREATICSLARANDRDIARAAQALEGAANARIHIFIATSALHMEKKLRMTPGQVLEQSLQSVRFARNLVADIEFSPEDGYRSDPDFLCRVIEAAIAEGATTINVPDTVGYAIPELYGNFIKMLRERVPNSDKAIWSVHCHNDLGMAVANSLAGVKMGGARQVECTINGLGERAGNCSLEEVVMAVKTRRDYFGLDLGIATQHILAASRMVSQTTGFAVQLNKAIVGANAFAHASGIHQDGVLKARDTYEIMRAQDVGWSANKMVLGKLSGRSAFKQRLQELGVSLDSEAEINLAFARFKELADRKSEIFDEDILALVSDESVSGDNEQYGFVSLFQQSETGKQPHARIVFTVNGQNVHAEAQGNGPVDASLKAIEAHVHSGAEMVLYSVNAISGSTESQGEVTVRLQNSGRIVNGVGADPDIVVASAKAYFSALNKLQNKADRVAAQG.

The Pyruvate carboxyltransferase domain occupies 5-268 (LIIFDTTLRD…DLGIATQHIL (264 aa)). Residues aspartate 14, histidine 202, histidine 204, and asparagine 239 each contribute to the Mn(2+) site. The segment at 394 to 512 (GFVSLFQQSE…NKADRVAAQG (119 aa)) is regulatory domain.

Belongs to the alpha-IPM synthase/homocitrate synthase family. LeuA type 1 subfamily. In terms of assembly, homodimer. It depends on Mn(2+) as a cofactor.

The protein resides in the cytoplasm. It carries out the reaction 3-methyl-2-oxobutanoate + acetyl-CoA + H2O = (2S)-2-isopropylmalate + CoA + H(+). It participates in amino-acid biosynthesis; L-leucine biosynthesis; L-leucine from 3-methyl-2-oxobutanoate: step 1/4. In terms of biological role, catalyzes the condensation of the acetyl group of acetyl-CoA with 3-methyl-2-oxobutanoate (2-ketoisovalerate) to form 3-carboxy-3-hydroxy-4-methylpentanoate (2-isopropylmalate). This is 2-isopropylmalate synthase from Verminephrobacter eiseniae (strain EF01-2).